The chain runs to 72 residues: Conotoxin Gla(2)-TxVI/A (72 aa).

The first 19 residues, 1–19 (MQKLIILLLVAAVLMSTQA), serve as a signal peptide directing secretion. Residues 20–44 (LFQEKRPMKKIDFLSKGKTDAEKQQ) constitute a propeptide that is removed on maturation. Disulfide bonds link cysteine 48–cysteine 62, cysteine 55–cysteine 66, and cysteine 61–cysteine 70. 4-carboxyglutamate is present on glutamate 56. A 4-hydroxyproline modification is found at proline 58. Serine amide is present on serine 71.

This sequence belongs to the conotoxin O2 superfamily. Post-translationally, brominated at one of the Trp residues. Expressed by the venom duct.

It is found in the secreted. This Conus textile (Cloth-of-gold cone) protein is Conotoxin Gla(2)-TxVI/A.